The sequence spans 633 residues: MGKIIGIDLGTTNSCVAVMQGTQPTVIENSEGSRTTPSMVAFTKTGERLVGQAAKRQAVTNPKNTIFSIKRFMGRKYDEVPNEKKLASYDVVNEGGYAKVKIGDKTYSPQEISAMILQKMKQTAEDFLGEKVTEAVITVPAYFNDAQRQATKDAGKIAGLEVKRIINEPTAAALAYGLDKKKENEKVAVFDLGGGTFDISILELGGGVFEVKSTDGDTHLGGDDFDQVIINYLADEFKKQEGIDLRKDAIALQRLKEAAEKAKIELSSRTDTEINLPFITATQEGPKHLVINLTRAKFEAMSAALFDKLFEPCRRAIKNSKFDIKEIDEVVLVGGSTRIPKVQALVKEFFGKEPNKSVNPDEVVAIGAAIQGGVLQGDVTDVLLLDVTPLSLGIETLGGVMTKLIEANTTIPTRKQEIFSTAADNQTSVEVHVLQGERPMASDNKTLGRFHLSDIPPAPRGVPQIEVTFDIDANGILNVSAKDKATGKEQSIKIEASGKLTEAEIEKMKEDAKAHAAEDQKRKEEIELKNSADSLIFSTEKQLTELGDKLPADKKAAIESALEKLKEAHKSGRVDAIKPAMDELSKVWSDAASNLYGQPGAEPQPETNGHAGGSKGGDGAVNAEYEVIDGDDK.

The residue at position 196 (T196) is a Phosphothreonine; by autocatalysis. The disordered stretch occupies residues N594–K633. Residues H610 to G619 show a composition bias toward gly residues.

The protein belongs to the heat shock protein 70 family.

In terms of biological role, acts as a chaperone. The chain is Chaperone protein DnaK from Chlorobaculum tepidum (strain ATCC 49652 / DSM 12025 / NBRC 103806 / TLS) (Chlorobium tepidum).